Here is a 453-residue protein sequence, read N- to C-terminus: uncharacterized protein (453 aa).

It to B.subtilis YcdB.

This is an uncharacterized protein from Bacillus subtilis (strain 168).